Here is a 448-residue protein sequence, read N- to C-terminus: tRNA-2-methylthio-N(6)-dimethylallyladenosine synthase (448 aa).

Residues 2 to 120 enclose the MTTase N-terminal domain; the sequence is KKYRIIVFGC…LPELIGKVIE (119 aa). [4Fe-4S] cluster is bound by residues cysteine 11, cysteine 47, cysteine 81, cysteine 158, cysteine 162, and cysteine 165. A Radical SAM core domain is found at 144–374; sequence RKEGVRAWVT…IKLQNKISLE (231 aa). The TRAM domain maps to 377–440; the sequence is EEEVGQTQEV…LAHLTGILSY (64 aa).

It belongs to the methylthiotransferase family. MiaB subfamily. Monomer. [4Fe-4S] cluster is required as a cofactor.

It localises to the cytoplasm. It carries out the reaction N(6)-dimethylallyladenosine(37) in tRNA + (sulfur carrier)-SH + AH2 + 2 S-adenosyl-L-methionine = 2-methylsulfanyl-N(6)-dimethylallyladenosine(37) in tRNA + (sulfur carrier)-H + 5'-deoxyadenosine + L-methionine + A + S-adenosyl-L-homocysteine + 2 H(+). In terms of biological role, catalyzes the methylthiolation of N6-(dimethylallyl)adenosine (i(6)A), leading to the formation of 2-methylthio-N6-(dimethylallyl)adenosine (ms(2)i(6)A) at position 37 in tRNAs that read codons beginning with uridine. The polypeptide is tRNA-2-methylthio-N(6)-dimethylallyladenosine synthase (Pelotomaculum thermopropionicum (strain DSM 13744 / JCM 10971 / SI)).